The sequence spans 194 residues: 7-methyl-GTP pyrophosphatase (194 aa).

Residue D71 is the Proton acceptor of the active site.

This sequence belongs to the Maf family. YceF subfamily. The cofactor is a divalent metal cation.

It localises to the cytoplasm. The catalysed reaction is N(7)-methyl-GTP + H2O = N(7)-methyl-GMP + diphosphate + H(+). Its function is as follows. Nucleoside triphosphate pyrophosphatase that hydrolyzes 7-methyl-GTP (m(7)GTP). May have a dual role in cell division arrest and in preventing the incorporation of modified nucleotides into cellular nucleic acids. This chain is 7-methyl-GTP pyrophosphatase, found in Aromatoleum aromaticum (strain DSM 19018 / LMG 30748 / EbN1) (Azoarcus sp. (strain EbN1)).